The primary structure comprises 1521 residues: Retroelement silencing factor 1 (1521 aa).

Residue Lys223 forms a Glycyl lysine isopeptide (Lys-Gly) (interchain with G-Cter in SUMO2) linkage. The segment at 621 to 640 (EKQHKPIQGDPDIADSSLGK) is disordered. A Phosphoserine modification is found at Ser910. Phosphothreonine is present on Thr996. Composition is skewed to polar residues over residues 1093-1105 (KNMPFSKQASQES) and 1124-1142 (LSSNTDPCRSNTSSVQSVS). Disordered regions lie at residues 1093-1147 (KNMP…EKKK), 1204-1230 (ERASVQEKTVPSPESSDPKGSSSKSTR), and 1312-1335 (EASRTHSVSNNNKGKFDGKQPDKM). Ser1142 carries the post-translational modification Phosphoserine. Positions 1214–1228 (PSPESSDPKGSSSKS) are enriched in low complexity. Residues 1325 to 1335 (GKFDGKQPDKM) show a composition bias toward basic and acidic residues. Residue Lys1411 forms a Glycyl lysine isopeptide (Lys-Gly) (interchain with G-Cter in SUMO2) linkage. Disordered regions lie at residues 1425 to 1444 (DKQDCPGPGPEKEQAPVQVS) and 1457 to 1485 (IPTRTKMPESSQRDSADSRLSKRSLSADE). A compositionally biased stretch (basic and acidic residues) spans 1467 to 1476 (SQRDSADSRL). Ser1482 and Ser1514 each carry phosphoserine.

As to quaternary structure, interacts with SETDB1.

The protein resides in the nucleus. In terms of biological role, plays a role in the regulation of imprinted gene expression, regulates repressive epigenetic modifications associated with SETDB1. Required for the recruitment or accumulation of SETDB1 to the endogenous retroviruses (ERVs) and maintenance of repressive chromatin configuration, contributing to a subset of the SETDB1-dependent ERV silencing in embryonic stem cells. The protein is Retroelement silencing factor 1 of Mus musculus (Mouse).